Consider the following 338-residue polypeptide: Phenylalanine--tRNA ligase alpha subunit (338 aa).

E253 lines the Mg(2+) pocket.

Belongs to the class-II aminoacyl-tRNA synthetase family. Phe-tRNA synthetase alpha subunit type 1 subfamily. In terms of assembly, tetramer of two alpha and two beta subunits. Mg(2+) is required as a cofactor.

The protein resides in the cytoplasm. It carries out the reaction tRNA(Phe) + L-phenylalanine + ATP = L-phenylalanyl-tRNA(Phe) + AMP + diphosphate + H(+). In Legionella pneumophila (strain Lens), this protein is Phenylalanine--tRNA ligase alpha subunit.